The sequence spans 81 residues: DNA-directed RNA polymerase subunit Rpo6 (81 aa).

The protein belongs to the archaeal Rpo6/eukaryotic RPB6 RNA polymerase subunit family. In terms of assembly, part of the RNA polymerase complex.

It is found in the cytoplasm. It catalyses the reaction RNA(n) + a ribonucleoside 5'-triphosphate = RNA(n+1) + diphosphate. DNA-dependent RNA polymerase (RNAP) catalyzes the transcription of DNA into RNA using the four ribonucleoside triphosphates as substrates. The polypeptide is DNA-directed RNA polymerase subunit Rpo6 (Thermofilum pendens (strain DSM 2475 / Hrk 5)).